The following is a 392-amino-acid chain: Anhydro-N-acetylmuramic acid kinase (392 aa).

An ATP-binding site is contributed by G19–D26.

The protein belongs to the anhydro-N-acetylmuramic acid kinase family.

It carries out the reaction 1,6-anhydro-N-acetyl-beta-muramate + ATP + H2O = N-acetyl-D-muramate 6-phosphate + ADP + H(+). Its pathway is amino-sugar metabolism; 1,6-anhydro-N-acetylmuramate degradation. It participates in cell wall biogenesis; peptidoglycan recycling. In terms of biological role, catalyzes the specific phosphorylation of 1,6-anhydro-N-acetylmuramic acid (anhMurNAc) with the simultaneous cleavage of the 1,6-anhydro ring, generating MurNAc-6-P. Is required for the utilization of anhMurNAc either imported from the medium or derived from its own cell wall murein, and thus plays a role in cell wall recycling. The chain is Anhydro-N-acetylmuramic acid kinase from Trichormus variabilis (strain ATCC 29413 / PCC 7937) (Anabaena variabilis).